Consider the following 528-residue polypeptide: UDP-glucuronosyltransferase 2A1 (528 aa).

The first 21 residues, 1 to 21 (MLKNILLCSLQISLLGMSLGG), serve as a signal peptide directing secretion. Over 22–494 (NVLIWPMEGS…FQYHSLDVIG (473 aa)) the chain is Extracellular. Residue asparagine 49 is glycosylated (N-linked (GlcNAc...) asparagine). Residue lysine 135 is modified to N6-succinyllysine. Asparagine 314 carries N-linked (GlcNAc...) asparagine glycosylation. Residues 495 to 515 (FLLACVASAILLVAKCCLFIF) traverse the membrane as a helical segment. Over 516–528 (QKVGKTGKKKKRD) the chain is Cytoplasmic.

Belongs to the UDP-glycosyltransferase family.

The protein localises to the membrane. The enzyme catalyses glucuronate acceptor + UDP-alpha-D-glucuronate = acceptor beta-D-glucuronoside + UDP + H(+). The catalysed reaction is 16beta,17beta-estriol + UDP-alpha-D-glucuronate = 16beta,17beta-estriol 16-O-(beta-D-glucuronate) + UDP + H(+). It catalyses the reaction 16alpha,17alpha-estriol + UDP-alpha-D-glucuronate = 16alpha,17alpha-estriol 16-O-(beta-D-glucuronate) + UDP + H(+). It carries out the reaction 17alpha-estradiol + UDP-alpha-D-glucuronate = 17alpha-estradiol 17-O-(beta-D-glucuronate) + UDP + H(+). The enzyme catalyses 17alpha-estradiol + UDP-alpha-D-glucuronate = 17alpha-estradiol 3-O-(beta-D-glucuronate) + UDP + H(+). The catalysed reaction is 17beta-estradiol + UDP-alpha-D-glucuronate = 17beta-estradiol 3-O-(beta-D-glucuronate) + UDP + H(+). It catalyses the reaction 17beta-estradiol + UDP-alpha-D-glucuronate = 17beta-estradiol 17-O-(beta-D-glucuronate) + UDP + H(+). It carries out the reaction testosterone + UDP-alpha-D-glucuronate = testosterone 17-O-(beta-D-glucuronate) + UDP + H(+). The enzyme catalyses epitestosterone + UDP-alpha-D-glucuronate = epitestosterone 17-O-(beta-D-glucuronate) + UDP + H(+). The catalysed reaction is lithocholate + UDP-alpha-D-glucuronate = lithocholoyl-3-O-(beta-D-glucuronate) + UDP + H(+). It catalyses the reaction lithocholate + UDP-alpha-D-glucuronate = lithocholoyl-24-O-(beta-D-glucuronate) + UDP. It carries out the reaction deoxycholate + UDP-alpha-D-glucuronate = deoxycholoyl-24-O-(beta-D-glucuronate) + UDP. The enzyme catalyses hyodeoxycholate + UDP-alpha-D-glucuronate = hyodeoxycholate 6-O-(beta-D-glucuronate) + UDP + H(+). The catalysed reaction is hyocholate + UDP-alpha-D-glucuronate = hyocholoyl-24-O-(beta-D-glucuronate) + UDP. Its function is as follows. UDP-glucuronosyltransferase (UGT) that catalyzes phase II biotransformation reactions in which lipophilic substrates are conjugated with glucuronic acid to increase the metabolite's water solubility, thereby facilitating excretion into either the urine or bile. Essential for the elimination and detoxification of drugs, xenobiotics and endogenous compounds. Catalyzes the glucuronidation of endogenous steroid hormones such as androgens (testosterones) and estrogens (estradiol and estriol). Contributes to bile acid (BA) detoxification by catalyzing the glucuronidation of BA substrates, which are natural detergents for dietary lipids absorption. Shows a high affinity to aliphatic odorants such as citronellol as well as olfactory tissue specificity, and therefore may be involved in olfaction. The sequence is that of UDP-glucuronosyltransferase 2A1 from Mus musculus (Mouse).